A 185-amino-acid polypeptide reads, in one-letter code: Ribosome-recycling factor (185 aa).

The protein belongs to the RRF family.

It localises to the cytoplasm. In terms of biological role, responsible for the release of ribosomes from messenger RNA at the termination of protein biosynthesis. May increase the efficiency of translation by recycling ribosomes from one round of translation to another. The chain is Ribosome-recycling factor from Alcanivorax borkumensis (strain ATCC 700651 / DSM 11573 / NCIMB 13689 / SK2).